We begin with the raw amino-acid sequence, 251 residues long: Phosphoribosylaminoimidazole-succinocarboxamide synthase (251 aa).

It belongs to the SAICAR synthetase family.

It carries out the reaction 5-amino-1-(5-phospho-D-ribosyl)imidazole-4-carboxylate + L-aspartate + ATP = (2S)-2-[5-amino-1-(5-phospho-beta-D-ribosyl)imidazole-4-carboxamido]succinate + ADP + phosphate + 2 H(+). The protein operates within purine metabolism; IMP biosynthesis via de novo pathway; 5-amino-1-(5-phospho-D-ribosyl)imidazole-4-carboxamide from 5-amino-1-(5-phospho-D-ribosyl)imidazole-4-carboxylate: step 1/2. The chain is Phosphoribosylaminoimidazole-succinocarboxamide synthase from Ruegeria pomeroyi (strain ATCC 700808 / DSM 15171 / DSS-3) (Silicibacter pomeroyi).